The following is a 146-amino-acid chain: Snake venom vascular endothelial growth factor toxin (146 aa).

An N-terminal signal peptide occupies residues 1–24 (MAAYLLAVAILFCIQGWPLGTVQG). Position 25 is a pyrrolidone carboxylic acid (Q25). 3 cysteine pairs are disulfide-bonded: C38-C80, C69-C115, and C73-C117. The disordered stretch occupies residues 119–146 (PRSASGVNSRKHKRNPEEGEPRAKFPFV). The segment covering 133–146 (NPEEGEPRAKFPFV) has biased composition (basic and acidic residues).

The protein belongs to the PDGF/VEGF growth factor family. Snake venom VEGF subfamily. Homodimer; disulfide-linked. Interacts with VEGF receptor-1 (FLT1) with a high affinity, whereas it binds to VEGF receptor-2 (KDR) with a low affinity. Does not bind VEGF receptor-3 (FLT4). As to expression, expressed by the venom gland.

The protein resides in the secreted. Its function is as follows. Snake venom VEGFs may contribute to venom dispersion and prey subjugation by inducing vascular permeability and hypotension. This protein induces vascular permeability probably through VEGF (VEGFR) signaling. This protein also induces a drastic hypotensive effect after intravenous injection. The hypotension is mediated by nitric oxide (NO), which is produced by VEGF-activated endothelium NO synthase. Also induces angiogenesis in vitro. Like other crotalid VEGFs, this protein interacts with VEGF receptor-1 (FLT1) with a high affinity, whereas it binds to VEGF receptor-2 (KDR) with a low affinity. This Bothrops insularis (Golden lancehead) protein is Snake venom vascular endothelial growth factor toxin.